The primary structure comprises 499 residues: Membrane-associated tyrosine- and threonine-specific cdc2-inhibitory kinase (499 aa).

M1 is modified (N-acetylmethionine). The segment at 1-29 (MLERPPALAMPMPTEGTPPPLSGTPIPVP) is disordered. A compositionally biased stretch (pro residues) spans 16-28 (GTPPPLSGTPIPV). Position 17 is a phosphothreonine (T17). A Phosphoserine modification is found at S40. Positions 42 to 72 (KRPRGLSRSLPPPPPAKGSIPISRLFPPRTP) are disordered. Phosphoserine is present on residues S94 and S120. One can recognise a Protein kinase domain in the interval 110-359 (FQRLSRLGHG…AEALLALPVL (250 aa)). Residues 116–124 (LGHGSYGEV) and K139 each bind ATP. 2 positions are modified to phosphoserine: S143 and S160. The active-site Proton acceptor is D233. Mg(2+)-binding residues include N238, D251, and G253. The Membrane-association motif motif lies at 382–398 (LWQALLALLCWLWHGLA). The tract at residues 398–499 (AHPASWLQPL…SLFEDTLDPT (102 aa)) is interaction with PIN1. A Phosphoserine; by PLK1 modification is found at S426. Positions 437–499 (GPSLSPEAVL…SLFEDTLDPT (63 aa)) are interaction with CDC2-CCNB1. Residues 451 to 485 (GSTSTPRSRCTPRDALDLSDINSEPPRGSFPSFEP) are disordered. 3 positions are modified to phosphoserine: S469, S473, and S482. T495 is modified (phosphothreonine; by PLK1).

Belongs to the protein kinase superfamily. Ser/Thr protein kinase family. WEE1 subfamily. As to quaternary structure, interacts with CDC2-CCNB1 complex. Can also interact with PIN1 when phosphorylated by CDC2-CCNB1. Autophosphorylated. Phosphorylated by CDC2-CCNB1 complexes on undefined serine and threonine residues. The phosphorylation by CDC2-CCNB1 complexes may inhibit the catalytic activity.

Its subcellular location is the endoplasmic reticulum membrane. The protein resides in the golgi apparatus membrane. The enzyme catalyses L-seryl-[protein] + ATP = O-phospho-L-seryl-[protein] + ADP + H(+). It carries out the reaction L-threonyl-[protein] + ATP = O-phospho-L-threonyl-[protein] + ADP + H(+). Negatively regulated by hyperphosphorylation during mitosis. The hyperphosphorylated form does not associate with CCNB1-CDC2 complexes. The PLK1 protein kinase may be required for mitotic phosphorylation. Acts as a negative regulator of entry into mitosis (G2 to M transition) by phosphorylation of the CDK1 kinase specifically when CDK1 is complexed to cyclins. Mediates phosphorylation of CDK1 predominantly on 'Thr-14'. Also involved in Golgi fragmentation. May be involved in phosphorylation of CDK1 on 'Tyr-15' to a lesser degree, however tyrosine kinase activity is unclear and may be indirect. This chain is Membrane-associated tyrosine- and threonine-specific cdc2-inhibitory kinase (PKMYT1), found in Homo sapiens (Human).